Consider the following 1043-residue polypeptide: Desmoglein-1 (1043 aa).

The first 23 residues, 1–23 (MNWPFFRAAVVLFIFLVVLEVNS), serve as a signal peptide directing secretion. Positions 24–49 (DFRIQVRDYNTKNGTIKWHSLRRQKR) are excised as a propeptide. Cadherin domains are found at residues 50–158 (EWIK…PVFS), 159–270 (MSTF…PYME), 271–385 (LPTQ…GSVF), and 386–498 (RPGS…VNGS). Residues 50–551 (EWIKFAAACR…PLRDNVHFGP (502 aa)) lie on the Extracellular side of the membrane. Residues asparagine 110 and asparagine 180 are each glycosylated (N-linked (GlcNAc...) asparagine). Asparagine 496 carries an N-linked (GlcNAc...) asparagine glycan. A helical membrane pass occupies residues 552 to 572 (AGIGLLIMGFLVLGLVPFLLM). The Cytoplasmic segment spans residues 573 to 1043 (CCDCGGAPGG…TKYSTVQYTK (471 aa)). Residues 770–807 (DVEPFPDSDPSWPPKSTEPVCPPQGTEPTGGGHPPISP) form a disordered region. Desmoglein repeat repeat units follow at residues 819–845 (TYPS…TVTE), 846–875 (SYTS…ERVV), 876–905 (GPIS…ERVI), 906–933 (APSS…ERVI), and 934–962 (QPTS…ERVV).

In terms of assembly, binds to JUP/plakoglobin. Interacts with PKP2. Interacts with DSC3; there is evidence to suggest that the interaction promotes cell-cell adhesion of keratinocytes. As to expression, expressed in the epidermis. Expressed in the muzzle epithelium.

It is found in the cell membrane. The protein localises to the cell junction. It localises to the desmosome. Its subcellular location is the cytoplasm. The protein resides in the nucleus. Component of intercellular desmosome junctions. Involved in the interaction of plaque proteins and intermediate filaments mediating cell-cell adhesion. The polypeptide is Desmoglein-1 (DSG1) (Bos taurus (Bovine)).